We begin with the raw amino-acid sequence, 207 residues long: Claudin-11 (207 aa).

A topological domain (cytoplasmic) is located at residue Met-1. The chain crosses the membrane as a helical span at residues 2–22 (VATCLQVVGFVTSFVGWIGVI). The Extracellular portion of the chain corresponds to 23 to 82 (VTTSTNDWVVTCGYTIPTCRKLDELGSKGLWADCVMATGLYHCKPLVDILILPGYVQACR). A helical transmembrane segment spans residues 83–103 (ALMIAASVLGLPAILLLLTVL). The Cytoplasmic portion of the chain corresponds to 104-122 (PCIRMGQEPGVAKYRRAQL). The helical transmembrane segment at 123–143 (AGVLLILLALCALVATIWFPV) threads the bilayer. At 144 to 157 (CAHRETTIVSFGYS) the chain is on the extracellular side. The helical transmembrane segment at 158 to 178 (LYAGWIGAVLCLVGGCVILCC) threads the bilayer. At 179–207 (AGDAQAFGENRFYYTAGSSSPTHAKSAHV) the chain is on the cytoplasmic side. A phosphoserine mark is found at Ser-197 and Ser-198.

It belongs to the claudin family. As to quaternary structure, interacts with tetraspanin-3/TSPAN3. Interacts with OCLN.

Its subcellular location is the cell junction. The protein resides in the tight junction. It is found in the cell membrane. Its function is as follows. Plays a major role in tight junction-specific obliteration of the intercellular space, through calcium-independent cell-adhesion activity. This chain is Claudin-11 (CLDN11), found in Homo sapiens (Human).